The sequence spans 213 residues: tRNA (guanine-N(7)-)-methyltransferase (213 aa).

The S-adenosyl-L-methionine site is built by Glu43, Asp68, Asn95, and Asn117. Residues Asp153 and 190-193 (TEYE) each bind substrate.

This sequence belongs to the class I-like SAM-binding methyltransferase superfamily. TrmB family.

The catalysed reaction is guanosine(46) in tRNA + S-adenosyl-L-methionine = N(7)-methylguanosine(46) in tRNA + S-adenosyl-L-homocysteine. The protein operates within tRNA modification; N(7)-methylguanine-tRNA biosynthesis. In terms of biological role, catalyzes the formation of N(7)-methylguanine at position 46 (m7G46) in tRNA. The polypeptide is tRNA (guanine-N(7)-)-methyltransferase (Desulfitobacterium hafniense (strain DSM 10664 / DCB-2)).